Reading from the N-terminus, the 296-residue chain is Nucleotide-binding protein SGO_0954 (296 aa).

ATP is bound at residue G13–T20. Residue D63–S66 coordinates GTP.

It belongs to the RapZ-like family.

Functionally, displays ATPase and GTPase activities. This Streptococcus gordonii (strain Challis / ATCC 35105 / BCRC 15272 / CH1 / DL1 / V288) protein is Nucleotide-binding protein SGO_0954.